The following is a 93-amino-acid chain: Small ribosomal subunit protein uS19 (93 aa).

The protein belongs to the universal ribosomal protein uS19 family.

Functionally, protein S19 forms a complex with S13 that binds strongly to the 16S ribosomal RNA. The sequence is that of Small ribosomal subunit protein uS19 from Campylobacter jejuni subsp. jejuni serotype O:6 (strain 81116 / NCTC 11828).